The following is a 444-amino-acid chain: Probable glycine dehydrogenase (decarboxylating) subunit 1 (444 aa).

Belongs to the GcvP family. N-terminal subunit subfamily. As to quaternary structure, the glycine cleavage system is composed of four proteins: P, T, L and H. In this organism, the P 'protein' is a heterodimer of two subunits.

It carries out the reaction N(6)-[(R)-lipoyl]-L-lysyl-[glycine-cleavage complex H protein] + glycine + H(+) = N(6)-[(R)-S(8)-aminomethyldihydrolipoyl]-L-lysyl-[glycine-cleavage complex H protein] + CO2. Its function is as follows. The glycine cleavage system catalyzes the degradation of glycine. The P protein binds the alpha-amino group of glycine through its pyridoxal phosphate cofactor; CO(2) is released and the remaining methylamine moiety is then transferred to the lipoamide cofactor of the H protein. The polypeptide is Probable glycine dehydrogenase (decarboxylating) subunit 1 (Moorella thermoacetica (strain ATCC 39073 / JCM 9320)).